A 355-amino-acid chain; its full sequence is Lipoyl synthase (355 aa).

In terms of domain architecture, RPE1 insert spans 7–55 (HLSKFAYREEFAGNTEVLATAAYKEDCADASTGLTPKLPLEVEFGKMSK). [4Fe-4S] cluster is bound by residues Cys-86, Cys-91, Cys-97, Cys-112, Cys-116, Cys-119, and Ser-325. The Radical SAM core domain occupies 98-314 (WSKKHATVMI…ERVARTKGFL (217 aa)).

Belongs to the radical SAM superfamily. Lipoyl synthase family. [4Fe-4S] cluster serves as cofactor.

It localises to the cytoplasm. The enzyme catalyses [[Fe-S] cluster scaffold protein carrying a second [4Fe-4S](2+) cluster] + N(6)-octanoyl-L-lysyl-[protein] + 2 oxidized [2Fe-2S]-[ferredoxin] + 2 S-adenosyl-L-methionine + 4 H(+) = [[Fe-S] cluster scaffold protein] + N(6)-[(R)-dihydrolipoyl]-L-lysyl-[protein] + 4 Fe(3+) + 2 hydrogen sulfide + 2 5'-deoxyadenosine + 2 L-methionine + 2 reduced [2Fe-2S]-[ferredoxin]. Its pathway is protein modification; protein lipoylation via endogenous pathway; protein N(6)-(lipoyl)lysine from octanoyl-[acyl-carrier-protein]: step 2/2. Functionally, catalyzes the radical-mediated insertion of two sulfur atoms into the C-6 and C-8 positions of the octanoyl moiety bound to the lipoyl domains of lipoate-dependent enzymes, thereby converting the octanoylated domains into lipoylated derivatives. This is Lipoyl synthase from Rickettsia bellii (strain RML369-C).